The sequence spans 870 residues: MOG interacting and ectopic P-granules protein 1 (870 aa).

The interval 1-244 (MVTADETVLA…VPEEDNNEQA (244 aa)) is disordered. The segment covering 9-20 (LATTTNTTSMSV) has biased composition (polar residues). Residues 41-51 (EQLKAEQREVM) show a composition bias toward basic and acidic residues. Acidic residues-rich tracts occupy residues 77-99 (EVIE…DENG), 129-142 (IEQD…EITE), and 203-214 (IELDDDDDDEIQ). 2 consecutive C2H2-type zinc fingers follow at residues 421–444 (HRCD…ENLH) and 450–473 (FQCT…FETH). The CCHC-type zinc finger occupies 486–508 (YPCAICEEDFNFKGVREQHYKQC). Polar residues-rich tracts occupy residues 673 to 688 (LQAA…SQKT) and 695 to 708 (KLVT…VGSS). Positions 673 to 708 (LQAAVNSMRSQNSQKTPTHRSSKLVTTPSHATVGSS) are disordered. C2H2-type zinc fingers lie at residues 713–736 (FVCE…QTTH), 753–776 (LACS…VMSH), 794–815 (GRCK…VADH), and 826–849 (YSCD…TSNH). The interval 847–870 (SNHPKGDKKTSTPAKKDDCITLDD) is disordered. The span at 850 to 870 (PKGDKKTSTPAKKDDCITLDD) shows a compositional bias: basic and acidic residues.

As to quaternary structure, interacts with hda-1, let-418, lin-1, mog-1, mog-4, mog-5, mog-6, pie-1 and unc-98. In terms of processing, sumoylated. Expressed in somatic cells of embryos, the head, hypodermis and tail of larvae and the germline of adults, including oocytes but not mature sperm and spermatocytes.

Its subcellular location is the nucleus. In terms of biological role, has a broad role in development, specifically in the genetic pathway SynMuvB that negatively regulates specification of the vulval cell fate. Required for fem-3 3'-UTR-mediated repression in the regulation of the sperm/oocyte switch. Acts by regulating the translation of fem-3 mRNA, by binding to its 3'-UTR. In Caenorhabditis elegans, this protein is MOG interacting and ectopic P-granules protein 1.